A 255-amino-acid chain; its full sequence is DNA repair protein RecO (255 aa).

The protein belongs to the RecO family.

In terms of biological role, involved in DNA repair and RecF pathway recombination. The polypeptide is DNA repair protein RecO (Acidithiobacillus ferrooxidans (strain ATCC 23270 / DSM 14882 / CIP 104768 / NCIMB 8455) (Ferrobacillus ferrooxidans (strain ATCC 23270))).